Consider the following 622-residue polypeptide: Apical membrane antigen 1 (622 aa).

A signal peptide spans 1-24 (MRKLYCVLLLSAFEFTYMINFGRG). Residues 25–546 (QNYWEHPYQN…EHKPTYDNMK (522 aa)) are Extracellular-facing. 5 disulfide bridges follow: cysteine 149/cysteine 302, cysteine 217/cysteine 247, cysteine 263/cysteine 275, cysteine 320/cysteine 418, and cysteine 337/cysteine 409. N-linked (GlcNAc...) asparagine glycans are attached at residues asparagine 286, asparagine 371, asparagine 421, asparagine 422, and asparagine 499. Disulfide bonds link cysteine 443-cysteine 502, cysteine 490-cysteine 507, and cysteine 492-cysteine 509. A helical membrane pass occupies residues 547-567 (IIIASSAAVAVLATILMVYLY). Topologically, residues 568 to 622 (KRKGNAEKYDKMDEPQDYGKSTSRNDEMLDPEASFWGEEKRASHTTPVLMEKPYY) are cytoplasmic. Residues 577–607 (DKMDEPQDYGKSTSRNDEMLDPEASFWGEEK) form a disordered region.

Belongs to the apicomplexan parasites AMA1 family.

It is found in the membrane. In terms of biological role, involved in parasite invasion of erythrocytes. This Plasmodium falciparum (isolate thtn / Thailand) protein is Apical membrane antigen 1 (AMA-1).